The following is a 365-amino-acid chain: HLA class I histocompatibility antigen, A alpha chain (365 aa).

The signal sequence occupies residues 1 to 24 (MAVMAPRTLLLLLSGALALTQTWA). A VL9 epitope region spans residues 3-11 (VMAPRTLLL). The segment at 25-114 (GSHSMRYFFT…LRGYYNQSEA (90 aa)) is alpha-1. Residues 25 to 308 (GSHSMRYFFT…ELSSQPTIPI (284 aa)) are Extracellular-facing. Y31 contributes to the a peptide antigen binding site. Sulfotyrosine is present on Y83. Residues T97 and Y108 each coordinate a peptide antigen. A glycan (N-linked (GlcNAc...) asparagine) is linked at N110. Positions 115-206 (GSHTIQIMYG…ENGKETLQRT (92 aa)) are alpha-2. A disulfide bond links C125 and C188. 5 residues coordinate a peptide antigen: D140, T167, K170, Y183, and Y195. Residues 207–298 (DPPKTHMTHH…GLPKPLTLRW (92 aa)) form an alpha-3 region. The region spanning 209 to 295 (PKTHMTHHPI…QHEGLPKPLT (87 aa)) is the Ig-like C1-type domain. C227 and C283 are disulfide-bonded. The tract at residues 299–308 (ELSSQPTIPI) is connecting peptide. The chain crosses the membrane as a helical span at residues 309–332 (VGIIAGLVLLGAVITGAVVAAVMW). Over 333 to 365 (RRKSSDRKGGSYTQAASSDSAQGSDVSLTACKV) the chain is Cytoplasmic. The segment at 339-365 (RKGGSYTQAASSDSAQGSDVSLTACKV) is disordered. S343 carries the phosphoserine modification. Y344 carries the phosphotyrosine modification. Over residues 346-359 (QAASSDSAQGSDVS) the composition is skewed to low complexity. Phosphoserine occurs at positions 349, 350, 352, 356, and 359.

Belongs to the MHC class I family. Heterotrimer that consists of an alpha chain HLA-A, a beta chain B2M and a peptide (peptide-HLA-A-B2M). Early in biogenesis, HLA-A-B2M dimer interacts with the components of the peptide-loading complex composed of TAPBP, TAP1-TAP2, TAPBPL, PDIA3/ERP57 and CALR. Interacts with TAP1-TAP2 transporter via TAPBP; this interaction is obligatory for the loading of peptide epitopes delivered to the ER by TAP1-TAP2 transporter. Interacts with TAPBPL; TAPBPL binds peptide-free HLA-A-B2M complexes or those loaded with low affinity peptides, likely facilitating peptide exchange for higher affinity peptides. Only optimally assembled peptide-HLA-B2M trimer translocates to the surface of antigen-presenting cells, where it interacts with TCR and CD8 coreceptor on the surface of T cells. HLA-A (via polymorphic alpha-1 and alpha-2 domains) interacts with antigen-specific TCR (via CDR3 domains). One HLA-A molecule (mainly via nonpolymorphic alpha-3 domain) interacts with one CD8A homodimer (via CDR-like loop); this interaction ensures peptide-HLA-A-B2M recognition by CD8-positive T cells only. Alleles A*23:01; A*24:02 and A*32:01 interact (via Bw4 motif) with KIR3DL1 on NK cells; this interaction is direct. In terms of assembly, (Microbial infection) Interacts with HHV-8 MIR1 protein. As to quaternary structure, (Microbial infection) Interacts with HTLV-1 accessory protein p12I. In terms of processing, (Microbial infection) Polyubiquitinated in a post ER compartment by interaction with human herpesvirus 8 MIR1 protein. This targets the protein for rapid degradation via the ubiquitin system. Post-translationally, N-linked glycosylation at Asn-110. In terms of tissue distribution, ubiquitous.

The protein localises to the cell membrane. It localises to the endoplasmic reticulum membrane. Its function is as follows. Antigen-presenting major histocompatibility complex class I (MHCI) molecule. In complex with B2M/beta 2 microglobulin displays primarily viral and tumor-derived peptides on antigen-presenting cells for recognition by alpha-beta T cell receptor (TCR) on HLA-A-restricted CD8-positive T cells, guiding antigen-specific T cell immune response to eliminate infected or transformed cells. May also present self-peptides derived from the signal sequence of secreted or membrane proteins, although T cells specific for these peptides are usually inactivated to prevent autoreactivity. Both the peptide and the MHC molecule are recognized by TCR, the peptide is responsible for the fine specificity of antigen recognition and MHC residues account for the MHC restriction of T cells. Typically presents intracellular peptide antigens of 8 to 13 amino acids that arise from cytosolic proteolysis via IFNG-induced immunoproteasome or via endopeptidase IDE/insulin-degrading enzyme. Can bind different peptides containing allele-specific binding motifs, which are mainly defined by anchor residues at position 2 and 9. In terms of biological role, allele A*01:01: Presents a restricted peptide repertoire including viral epitopes derived from IAV NP/nucleoprotein (CTELKLSDY), IAV PB1/polymerase basic protein 1 (VSDGGPNLY), HAdV-11 capsid L3/hexon protein (LTDLGQNLLY), SARS-CoV-2 3a/ORF3a (FTSDYYQLY) as well as tumor peptide antigens including MAGE1 (EADPTGHSY), MAGEA3 (EVDPIGHLY) and WT1 (TSEKRPFMCAY), all having in common a canonical motif with a negatively charged Asp or Glu residue at position 3 and a Tyr anchor residue at the C-terminus. A number of HLA-A*01:01-restricted peptides carry a post-translational modification with oxidation and N-terminal acetylation being the most frequent. Fails to present highly immunogenic peptides from the EBV latent antigens. Allele A*02:01: A major allele in human populations, presents immunodominant viral epitopes derived from IAV M/matrix protein 1 (GILGFVFTL), HIV-1 env (TLTSCNTSV), HIV-1 gag-pol (ILKEPVHGV), HTLV-1 Tax (LLFGYPVYV), HBV C/core antigen (FLPSDFFPS), HCMV UL83/pp65 (NLVPMVATV) as well as tumor peptide antigens including MAGEA4 (GVYDGREHTV), WT1 (RMFPNAPYL) and CTAG1A/NY-ESO-1 (SLLMWITQC), all having in common hydrophobic amino acids at position 2 and at the C-terminal anchors. Functionally, allele A*03:01: Presents viral epitopes derived from IAV NP (ILRGSVAHK), HIV-1 nef (QVPLRPMTYK), HIV-1 gag-pol (AIFQSSMTK), SARS-CoV-2 N/nucleoprotein (KTFPPTEPK) as well as tumor peptide antigens including PMEL (LIYRRRLMK), NODAL (HAYIQSLLK), TRP-2 (RMYNMVPFF), all having in common hydrophobic amino acids at position 2 and Lys or Arg anchor residues at the C-terminus. May also display spliced peptides resulting from the ligation of two separate proteasomal cleavage products that are not contiguous in the parental protein. Its function is as follows. Allele A*11:01: Presents several immunodominant epitopes derived from HIV-1 gag-pol and HHV-4 EBNA4, containing the peptide motif with Val, Ile, Thr, Leu, Tyr or Phe at position 2 and Lys anchor residue at the C-terminus. Important in the control of HIV-1, EBV and HBV infections. Presents an immunodominant epitope derived from SARS-CoV-2 N/nucleoprotein (KTFPPTEPK). In terms of biological role, allele A*23:01: Interacts with natural killer (NK) cell receptor KIR3DL1 and may contribute to functional maturation of NK cells and self-nonself discrimination during innate immune response. Allele A*24:02: Presents viral epitopes derived from HIV-1 nef (RYPLTFGWCF), EBV lytic- and latent-cycle antigens BRLF1 (TYPVLEEMF), BMLF1 (DYNFVKQLF) and LMP2 (IYVLVMLVL), SARS-CoV nucleocapsid/N (QFKDNVILL), as well as tumor peptide antigens including PRAME (LYVDSLFFL), all sharing a common signature motif, namely an aromatic residue Tyr or Phe at position 2 and a nonhydrophobic anchor residue Phe, Leu or Iso at the C-terminus. Interacts with natural killer (NK) cell receptor KIR3DL1 and may contribute to functional maturation of NK cells and self-nonself discrimination during innate immune response. Functionally, allele A*26:01: Presents several epitopes derived from HIV-1 gag-pol (EVIPMFSAL, ETKLGKAGY) and env (LVSDGGPNLY), carrying as anchor residues preferentially Glu at position 1, Val or Thr at position 2 and Tyr at the C-terminus. Its function is as follows. Allele A*29:02: Presents peptides having a common motif, namely a Glu residue at position 2 and Tyr or Leu anchor residues at the C-terminus. In terms of biological role, allele A*32:01: Interacts with natural killer (NK) cell receptor KIR3DL1 and may contribute to functional maturation of NK cells and self-nonself discrimination during innate immune response. Allele A*68:01: Presents viral epitopes derived from IAV NP (KTGGPIYKR) and HIV-1 tat (ITKGLGISYGR), having a common signature motif namely, Val or Thr at position 2 and positively charged residues Arg or Lys at the C-terminal anchor. Functionally, allele A*74:01: Presents immunodominant HIV-1 epitopes derived from gag-pol (GQMVHQAISPR, QIYPGIKVR) and rev (RQIHSISER), carrying an aliphatic residue at position 2 and Arg anchor residue at the C-terminus. May contribute to viral load control in chronic HIV-1 infection. The chain is HLA class I histocompatibility antigen, A alpha chain from Homo sapiens (Human).